The sequence spans 300 residues: Ubiquitin carboxyl-terminal hydrolase 2 (300 aa).

A UCH catalytic domain is found at 2–220 (SWTTIESDAG…IRFNLMVICK (219 aa)). Cys-83 acts as the Nucleophile in catalysis. The active-site Proton donor is His-159. The 30-residue stretch at 261–290 (NFVGLFVELSKLLVKDRIDKNTWNSTLETA) folds into the ULD domain.

This sequence belongs to the peptidase C12 family. As to quaternary structure, component of the 26S proteasome. Interacts with rpn10.

It localises to the nucleus. The catalysed reaction is Thiol-dependent hydrolysis of ester, thioester, amide, peptide and isopeptide bonds formed by the C-terminal Gly of ubiquitin (a 76-residue protein attached to proteins as an intracellular targeting signal).. In terms of biological role, ubiquitin-protein hydrolase is involved both in the processing of ubiquitin precursors and of ubiquitinated proteins. This enzyme is a thiol protease that recognizes and hydrolyzes a peptide bond at the C-terminal glycine of ubiquitin. The protein is Ubiquitin carboxyl-terminal hydrolase 2 (uch2) of Schizosaccharomyces pombe (strain 972 / ATCC 24843) (Fission yeast).